Here is a 155-residue protein sequence, read N- to C-terminus: 6,7-dimethyl-8-ribityllumazine synthase (155 aa).

5-amino-6-(D-ribitylamino)uracil-binding positions include Phe-22, 57 to 59 (AVE), and 81 to 83 (TVI). Residue 86–87 (GT) participates in (2S)-2-hydroxy-3-oxobutyl phosphate binding. The Proton donor role is filled by His-89. A 5-amino-6-(D-ribitylamino)uracil-binding site is contributed by Phe-114. Arg-128 is a (2S)-2-hydroxy-3-oxobutyl phosphate binding site.

The protein belongs to the DMRL synthase family. Forms an icosahedral capsid composed of 60 subunits, arranged as a dodecamer of pentamers.

It catalyses the reaction (2S)-2-hydroxy-3-oxobutyl phosphate + 5-amino-6-(D-ribitylamino)uracil = 6,7-dimethyl-8-(1-D-ribityl)lumazine + phosphate + 2 H2O + H(+). It participates in cofactor biosynthesis; riboflavin biosynthesis; riboflavin from 2-hydroxy-3-oxobutyl phosphate and 5-amino-6-(D-ribitylamino)uracil: step 1/2. Catalyzes the formation of 6,7-dimethyl-8-ribityllumazine by condensation of 5-amino-6-(D-ribitylamino)uracil with 3,4-dihydroxy-2-butanone 4-phosphate. This is the penultimate step in the biosynthesis of riboflavin. This is 6,7-dimethyl-8-ribityllumazine synthase from Psychromonas ingrahamii (strain DSM 17664 / CCUG 51855 / 37).